Reading from the N-terminus, the 368-residue chain is Cyclic di-GMP phosphodiesterase TM_0186 (368 aa).

The 113-residue stretch at 2 to 114 (TVLIVEDDDI…LLRLKITHAL (113 aa)) folds into the Response regulatory domain. Asp-49 carries the 4-aspartylphosphate modification. The HD-GYP domain maps to 148–345 (YEDFLFEVLE…ITDVYRREKD (198 aa)). A divalent metal cation-binding residues include Glu-169, His-173, His-205, Asp-206, His-234, His-260, His-261, and Asp-289. The segment at 341-368 (RREKDEDTSHNGGRSHQSSPGEGVEGIR) is disordered. Residues 350–360 (HNGGRSHQSSP) are compositionally biased toward polar residues.

The enzyme catalyses 3',3'-c-di-GMP + 2 H2O = 2 GMP + 2 H(+). Its activity is regulated as follows. Can function in vivo with either divalent iron or manganese occupying di- and trimetal sites. Dimetal is necessary and sufficient to catalyze conversion of c-di-GMP to pGpG, but conversion of pGpG to GMP requires an occupied trimetal site. Phosphodiesterase (PDE) that catalyzes the hydrolysis of cyclic diguanylate (c-di-GMP) to GMP. Hydrolyzes c-di-GMP to GMP in a two-step reaction, via the linear intermediate 5'-phosphoguanylyl(3'-&gt;5')guanosine (pGpG). The chain is Cyclic di-GMP phosphodiesterase TM_0186 from Thermotoga maritima (strain ATCC 43589 / DSM 3109 / JCM 10099 / NBRC 100826 / MSB8).